The following is a 620-amino-acid chain: Chaperone protein HscA homolog (620 aa).

Belongs to the heat shock protein 70 family.

Chaperone involved in the maturation of iron-sulfur cluster-containing proteins. Has a low intrinsic ATPase activity which is markedly stimulated by HscB. In Shewanella piezotolerans (strain WP3 / JCM 13877), this protein is Chaperone protein HscA homolog.